A 125-amino-acid chain; its full sequence is Large ribosomal subunit protein bL12 (125 aa).

Belongs to the bacterial ribosomal protein bL12 family. Homodimer. Part of the ribosomal stalk of the 50S ribosomal subunit. Forms a multimeric L10(L12)X complex, where L10 forms an elongated spine to which 2 to 4 L12 dimers bind in a sequential fashion. Binds GTP-bound translation factors.

Its function is as follows. Forms part of the ribosomal stalk which helps the ribosome interact with GTP-bound translation factors. Is thus essential for accurate translation. The protein is Large ribosomal subunit protein bL12 of Rickettsia prowazekii (strain Madrid E).